We begin with the raw amino-acid sequence, 123 residues long: Small ribosomal subunit protein uS13 (123 aa).

The disordered stretch occupies residues 97–123; it reads PVRGQRTHTNAKTRKGRSKLPVAAKKK.

Belongs to the universal ribosomal protein uS13 family. Part of the 30S ribosomal subunit. Forms a loose heterodimer with protein S19. Forms two bridges to the 50S subunit in the 70S ribosome.

Located at the top of the head of the 30S subunit, it contacts several helices of the 16S rRNA. In the 70S ribosome it contacts the 23S rRNA (bridge B1a) and protein L5 of the 50S subunit (bridge B1b), connecting the 2 subunits; these bridges are implicated in subunit movement. Contacts the tRNAs in the A and P-sites. In Ehrlichia canis (strain Jake), this protein is Small ribosomal subunit protein uS13.